The sequence spans 455 residues: Beta-cyclopiazonate dehydrogenase (455 aa).

The first 25 residues, 1–25 (MAVRIARFLGLSTVAYLALANGIDA), serve as a signal peptide directing secretion.

This sequence belongs to the beta-cyclopiazonate dehydrogenase family. It depends on FAD as a cofactor.

It carries out the reaction beta-cyclopiazonate + A = alpha-cyclopiazonate + AH2. In terms of biological role, beta-cyclopiazonate dehydrogenase involved in the synthesis of the fungal neurotoxin alpha-cyclopiazonic acid (CPA). CpaO carries out the dehydrogenation of beta-CPA to yield an unstable enimine product, which is captured by intramolecular cyclization to create the pentacyclic fused scaffold of alpha-cyclopiazonate. The chain is Beta-cyclopiazonate dehydrogenase from Aspergillus oryzae (strain ATCC 42149 / RIB 40) (Yellow koji mold).